The sequence spans 223 residues: Deoxyribose-phosphate aldolase (223 aa).

Asp-89 acts as the Proton donor/acceptor in catalysis. The active-site Schiff-base intermediate with acetaldehyde is the Lys-152. Residue Lys-181 is the Proton donor/acceptor of the active site.

It belongs to the DeoC/FbaB aldolase family. DeoC type 1 subfamily.

The protein localises to the cytoplasm. The catalysed reaction is 2-deoxy-D-ribose 5-phosphate = D-glyceraldehyde 3-phosphate + acetaldehyde. Its pathway is carbohydrate degradation; 2-deoxy-D-ribose 1-phosphate degradation; D-glyceraldehyde 3-phosphate and acetaldehyde from 2-deoxy-alpha-D-ribose 1-phosphate: step 2/2. Catalyzes a reversible aldol reaction between acetaldehyde and D-glyceraldehyde 3-phosphate to generate 2-deoxy-D-ribose 5-phosphate. The protein is Deoxyribose-phosphate aldolase of Bacillus cereus (strain B4264).